The chain runs to 149 residues: NADH-quinone oxidoreductase subunit A (149 aa).

A run of 3 helical transmembrane segments spans residues 16 to 36 (FAVF…GAFF), 68 to 88 (FYLV…LYAW), and 98 to 118 (LGFI…FYLV).

The protein belongs to the complex I subunit 3 family. In terms of assembly, NDH-1 is composed of 13 different subunits. Subunits NuoA, H, J, K, L, M, N constitute the membrane sector of the complex.

The protein localises to the cell inner membrane. It catalyses the reaction a quinone + NADH + 5 H(+)(in) = a quinol + NAD(+) + 4 H(+)(out). NDH-1 shuttles electrons from NADH, via FMN and iron-sulfur (Fe-S) centers, to quinones in the respiratory chain. The immediate electron acceptor for the enzyme in this species is believed to be ubiquinone. Couples the redox reaction to proton translocation (for every two electrons transferred, four hydrogen ions are translocated across the cytoplasmic membrane), and thus conserves the redox energy in a proton gradient. This chain is NADH-quinone oxidoreductase subunit A, found in Photorhabdus laumondii subsp. laumondii (strain DSM 15139 / CIP 105565 / TT01) (Photorhabdus luminescens subsp. laumondii).